A 377-amino-acid chain; its full sequence is Succinyl-diaminopimelate desuccinylase (377 aa).

Histidine 67 contributes to the Zn(2+) binding site. The active site involves aspartate 69. Aspartate 100 contacts Zn(2+). Catalysis depends on glutamate 134, which acts as the Proton acceptor. 3 residues coordinate Zn(2+): glutamate 135, glutamate 163, and histidine 349.

This sequence belongs to the peptidase M20A family. DapE subfamily. In terms of assembly, homodimer. Requires Zn(2+) as cofactor. It depends on Co(2+) as a cofactor.

The enzyme catalyses N-succinyl-(2S,6S)-2,6-diaminopimelate + H2O = (2S,6S)-2,6-diaminopimelate + succinate. The protein operates within amino-acid biosynthesis; L-lysine biosynthesis via DAP pathway; LL-2,6-diaminopimelate from (S)-tetrahydrodipicolinate (succinylase route): step 3/3. Its function is as follows. Catalyzes the hydrolysis of N-succinyl-L,L-diaminopimelic acid (SDAP), forming succinate and LL-2,6-diaminopimelate (DAP), an intermediate involved in the bacterial biosynthesis of lysine and meso-diaminopimelic acid, an essential component of bacterial cell walls. The chain is Succinyl-diaminopimelate desuccinylase from Actinobacillus pleuropneumoniae serotype 3 (strain JL03).